The following is a 172-amino-acid chain: dCTP deaminase (172 aa).

Residues 97–102 (RSSFAR) and Asp-113 each bind dCTP. Glu-123 acts as the Proton donor/acceptor in catalysis. Positions 155 and 162 each coordinate dCTP.

This sequence belongs to the dCTP deaminase family. In terms of assembly, homotrimer.

It catalyses the reaction dCTP + H2O + H(+) = dUTP + NH4(+). It functions in the pathway pyrimidine metabolism; dUMP biosynthesis; dUMP from dCTP (dUTP route): step 1/2. Catalyzes the deamination of dCTP to dUTP. This chain is dCTP deaminase, found in Metallosphaera sedula (strain ATCC 51363 / DSM 5348 / JCM 9185 / NBRC 15509 / TH2).